Here is a 312-residue protein sequence, read N- to C-terminus: Olfactory receptor 2B8 (312 aa).

The Extracellular segment spans residues 1-25 (MDQKNGSSFTGFILLGFSDRPQLEL). Asparagine 5 carries an N-linked (GlcNAc...) asparagine glycan. A helical membrane pass occupies residues 26-49 (VLFVVLLIFYIFTLLGNKTIIVLS). At 50 to 57 (HLDPHLHT) the chain is on the cytoplasmic side. Residues 58 to 79 (PMYFFFSNLSFLDLCYTTGIVP) traverse the membrane as a helical segment. Residues 80-100 (QLLVNLRGADKSISYGGCVVQ) lie on the Extracellular side of the membrane. A disulfide bridge connects residues cysteine 97 and cysteine 189. Residues 101 to 120 (LYISLGLGSTECVLLGVMVF) traverse the membrane as a helical segment. Residues 121–139 (DRYAAVCRPLHYTVVMHPC) lie on the Cytoplasmic side of the membrane. The helical transmembrane segment at 140-158 (LYVLMASTSWVIGFANSLL) threads the bilayer. The Extracellular portion of the chain corresponds to 159–195 (QTVLILLLTLCGRNKLEHFLCEVPPLLKLACVDTTMN). Residue asparagine 195 is glycosylated (N-linked (GlcNAc...) asparagine). A helical transmembrane segment spans residues 196 to 219 (ESELFFVSVIILLVPVALIIFSYS). Residues 220-236 (QIVRAVMRIKLATGQRK) are Cytoplasmic-facing. A helical transmembrane segment spans residues 237-259 (VFGTCGSHLTVVSLFYGTAIYAY). Residues 260-272 (LQPGNNYSQDQGK) lie on the Extracellular side of the membrane. An N-linked (GlcNAc...) asparagine glycan is attached at asparagine 265. A helical transmembrane segment spans residues 273-292 (FISLFYTIITPMINPLIYTL). At 293 to 312 (RNKDVKGALKKVLWKNYDSR) the chain is on the cytoplasmic side.

The protein belongs to the G-protein coupled receptor 1 family.

The protein resides in the cell membrane. Odorant receptor. The protein is Olfactory receptor 2B8 of Homo sapiens (Human).